A 129-amino-acid chain; its full sequence is Prefoldin subunit 6 (129 aa).

Alanine 2 carries the post-translational modification N-acetylalanine. N6-acetyllysine is present on lysine 21. Residue lysine 66 is modified to N6-acetyllysine; alternate. Lysine 66 is covalently cross-linked (Glycyl lysine isopeptide (Lys-Gly) (interchain with G-Cter in SUMO1); alternate). Lysine 66 participates in a covalent cross-link: Glycyl lysine isopeptide (Lys-Gly) (interchain with G-Cter in SUMO2); alternate.

It belongs to the prefoldin subunit beta family. As to quaternary structure, heterohexamer of two PFD-alpha type and four PFD-beta type subunits. Component of the PAQosome complex which is responsible for the biogenesis of several protein complexes and which consists of R2TP complex members RUVBL1, RUVBL2, RPAP3 and PIH1D1, URI complex members PFDN2, PFDN6, PDRG1, UXT and URI1 as well as ASDURF, POLR2E and DNAAF10/WDR92.

Its function is as follows. Binds specifically to cytosolic chaperonin (c-CPN) and transfers target proteins to it. Binds to nascent polypeptide chain and promotes folding in an environment in which there are many competing pathways for nonnative proteins. In Bos taurus (Bovine), this protein is Prefoldin subunit 6 (PFDN6).